The chain runs to 235 residues: Large ribosomal subunit protein uL1 (235 aa).

Belongs to the universal ribosomal protein uL1 family. Part of the 50S ribosomal subunit.

Its function is as follows. Binds directly to 23S rRNA. The L1 stalk is quite mobile in the ribosome, and is involved in E site tRNA release. Functionally, protein L1 is also a translational repressor protein, it controls the translation of the L11 operon by binding to its mRNA. The protein is Large ribosomal subunit protein uL1 of Prochlorococcus marinus (strain MIT 9303).